A 191-amino-acid polypeptide reads, in one-letter code: Transmembrane protein 17B (191 aa).

4 helical membrane-spanning segments follow: residues 50–70, 83–103, 115–135, and 147–167; these read MSLYFNMWFFPFWWISEVVML, FILITILIVMTLIEAIRLYLG, LAGFWLLTFLLQFPLILFQLF, and GVHIILALFIFAEVLFGFVAL.

It belongs to the TMEM17 family. In terms of assembly, part of the tectonic-like complex (also named B9 complex).

The protein resides in the cell projection. It localises to the cilium membrane. In terms of biological role, transmembrane component of the tectonic-like complex, a complex localized at the transition zone of primary cilia and acting as a barrier that prevents diffusion of transmembrane proteins between the cilia and plasma membranes. Required for ciliogenesis and sonic hedgehog/SHH signaling. This Danio rerio (Zebrafish) protein is Transmembrane protein 17B (Tmem17b).